Reading from the N-terminus, the 106-residue chain is Thioredoxin (106 aa).

Positions 1-106 (GATVKVTNAT…RLAAFLDASL (106 aa)) constitute a Thioredoxin domain. Cys31 and Cys34 are joined by a disulfide.

This sequence belongs to the thioredoxin family.

Participates in various redox reactions through the reversible oxidation of its active center dithiol to a disulfide and catalyzes dithiol-disulfide exchange reactions. The polypeptide is Thioredoxin (trxA) (Kitasatospora aureofaciens (Streptomyces aureofaciens)).